A 675-amino-acid chain; its full sequence is Vitamin K-dependent protein S (675 aa).

The signal sequence occupies residues 1 to 24 (MRVLSVRFRVLLACLALVLPNSET). Residues 25 to 41 (NFLSKERASQVLVRKRR) constitute a propeptide that is removed on maturation. In terms of domain architecture, Gla spans 42–87 (ANTLLEETKKGNLERECIEELCNKEEAREVFENNPETDYFYPKYLG). Residues E47, E48, E55, E57, E60, E61, E66, E67, E70, E73, and E77 each carry the 4-carboxyglutamate modification. Cysteines 58 and 63 form a disulfide. The segment at 88–116 (CLGAFRVGAFSAARQSANAYPDLRSCVNA) is thrombin-sensitive. The 39-residue stretch at 117–155 (IPDQCDPMPCNEDGYLSCKDGQGAFTCICKPGWQGDKCQ) folds into the EGF-like 1 domain. Intrachain disulfides connect C121-C134, C126-C143, C145-C154, C161-C175, C171-C184, C186-C199, C205-C217, C212-C226, C228-C241, C247-C256, C252-C265, C267-C282, and C449-C475. The residue at position 136 (D136) is a (3R)-3-hydroxyaspartate. The EGF-like 2; calcium-binding domain occupies 157-200 (DINECKDPSNINGGCSQTCDNTPGSYHCSCKIGFAMLTNKKDCK). The EGF-like 3; calcium-binding domain maps to 201-242 (DVDECSLKPSVCGTAVCKNIPGDFECECPNGYRYDPSSKSCK). The region spanning 243–283 (DVDECSENTCAQLCVNYPGGYSCYCDGKKGFKLAQDQRSCE) is the EGF-like 4; calcium-binding domain. Laminin G-like domains follow at residues 299 to 475 (LLYL…NKHC) and 484 to 665 (YYPG…AHSC). 2 N-linked (GlcNAc...) asparagine glycosylation sites follow: N499 and N509.

The iron and 2-oxoglutarate dependent 3-hydroxylation of aspartate and asparagine is (R) stereospecific within EGF domains. In terms of tissue distribution, plasma.

The protein localises to the secreted. Anticoagulant plasma protein; it is a cofactor to activated protein C in the degradation of coagulation factors Va and VIIIa. It helps to prevent coagulation and stimulating fibrinolysis. The polypeptide is Vitamin K-dependent protein S (Pros1) (Rattus norvegicus (Rat)).